Reading from the N-terminus, the 1520-residue chain is Putative lipoprotein AcfD homolog (1520 aa).

The signal sequence occupies residues 1-23 (MNKKFKYKKSLLAAILSATLLAG). Disordered regions lie at residues 22 to 107 (AGCD…GATC) and 226 to 247 (NAAT…TTPG). C24 carries N-palmitoyl cysteine lipidation. C24 carries the S-diacylglycerol cysteine lipid modification. Low complexity predominate over residues 31 to 42 (SSSDTPPVDSGT). Residues 51-77 (DPTPNPEPTPEPTPDPEPTPEPIPDPE) are compositionally biased toward pro residues. Residues 97-107 (GGSQRVTGATC) are compositionally biased toward polar residues. Residues 234-247 (STHTSPVVPVTTPG) show a composition bias toward low complexity. Residues 1081-1381 (GNMQSTGLWA…MYAQLKEWAE (301 aa)) enclose the Peptidase M60 domain. The tract at residues 1498-1520 (DLPKPEQGPETINQVTEHKMSAE) is disordered.

This sequence to V.cholerae AcfD (VC_0845).

The protein resides in the cell inner membrane. Involved in a type II secretion system (T2SS, formerly general secretion pathway, GSP) for the export of folded proteins across the outer membrane. In Escherichia coli (strain K12), this protein is Putative lipoprotein AcfD homolog (yghJ).